The primary structure comprises 964 residues: Integrator complex subunit 4 (964 aa).

Lysine 27 is subject to N6-acetyllysine. 8 HEAT repeats span residues 67–106 (AESV…TAGF), 146–184 (QATQ…LEKS), 191–229 (GSAA…RGLK), 230–264 (LHQT…SQLY), 278–314 (IRLV…EQVS), 370–406 (NLIE…AQSS), 407–445 (PSFA…NITL), and 447–485 (EDQL…GIHL). Lysine 792 participates in a covalent cross-link: Glycyl lysine isopeptide (Lys-Gly) (interchain with G-Cter in SUMO1); alternate. Lysine 792 participates in a covalent cross-link: Glycyl lysine isopeptide (Lys-Gly) (interchain with G-Cter in SUMO2); alternate.

The protein belongs to the Integrator subunit 4 family. As to quaternary structure, component of the Integrator complex, composed of core subunits INTS1, INTS2, INTS3, INTS4, INTS5, INTS6, INTS7, INTS8, INTS9/RC74, INTS10, INTS11/CPSF3L, INTS12, INTS13, INTS14 and INTS15. The core complex associates with protein phosphatase 2A subunits PPP2CA and PPP2R1A, to form the Integrator-PP2A (INTAC) complex. INTS4 is part of the RNA endonuclease subcomplex, composed of INTS4, INTS9, INTS11 and inositol hexakisphosphate (InsP6). Interacts with BRAT1; interaction is required for the assembly of the RNA endonuclease subcomplex.

The protein resides in the nucleus. It is found in the cytoplasm. In terms of biological role, component of the integrator complex, a multiprotein complex that terminates RNA polymerase II (Pol II) transcription in the promoter-proximal region of genes. The integrator complex provides a quality checkpoint during transcription elongation by driving premature transcription termination of transcripts that are unfavorably configured for transcriptional elongation: the complex terminates transcription by (1) catalyzing dephosphorylation of the C-terminal domain (CTD) of Pol II subunit POLR2A/RPB1 and SUPT5H/SPT5, (2) degrading the exiting nascent RNA transcript via endonuclease activity and (3) promoting the release of Pol II from bound DNA. The integrator complex is also involved in terminating the synthesis of non-coding Pol II transcripts, such as enhancer RNAs (eRNAs), small nuclear RNAs (snRNAs), telomerase RNAs and long non-coding RNAs (lncRNAs). Within the integrator complex, INTS4 acts as an scaffold that links INTS9 and INTS11. Mediates recruitment of cytoplasmic dynein to the nuclear envelope, probably as component of the integrator complex. This chain is Integrator complex subunit 4 (Ints4), found in Mus musculus (Mouse).